The following is a 372-amino-acid chain: Alanine dehydrogenase 1 (372 aa).

Residue histidine 94 is part of the active site. 170-200 is a binding site for NAD(+); sequence TYVIFGGGVAATNAANVALGLNAKVIIIELN.

This sequence belongs to the AlaDH/PNT family.

The enzyme catalyses L-alanine + NAD(+) + H2O = pyruvate + NH4(+) + NADH + H(+). Its pathway is amino-acid degradation; L-alanine degradation via dehydrogenase pathway; NH(3) and pyruvate from L-alanine: step 1/1. Its function is as follows. May play a role in cell wall synthesis as L-alanine is an important constituent of the peptidoglycan layer. The chain is Alanine dehydrogenase 1 (ald1) from Staphylococcus aureus (strain USA300).